A 122-amino-acid chain; its full sequence is Protein YqjC (122 aa).

The first 20 residues, 1-20 (MKYRIALAVSLFALSAGSYA), serve as a signal peptide directing secretion. The interval 65–100 (QLRADHQKKIAKQKDEVAERQQDLAEAKQKGDADKI) is disordered. Residues 66–100 (LRADHQKKIAKQKDEVAERQQDLAEAKQKGDADKI) are compositionally biased toward basic and acidic residues.

In Escherichia coli (strain K12), this protein is Protein YqjC (yqjC).